A 721-amino-acid polypeptide reads, in one-letter code: Polyribonucleotide nucleotidyltransferase (721 aa).

Residues D495 and D501 each coordinate Mg(2+). One can recognise a KH domain in the interval 562–621 (PRLLSFRIDPELIGTVIGPGGRTIKNITERTNTKIDIEDSGIVTIASHDGAAAEEAQKII). The S1 motif domain occupies 631 to 699 (GEVFTGSITR…NRGRINLTLR (69 aa)). The disordered stretch occupies residues 700-721 (GVPQSGESADSQPAPTPVAPLS).

This sequence belongs to the polyribonucleotide nucleotidyltransferase family. It depends on Mg(2+) as a cofactor.

It is found in the cytoplasm. The catalysed reaction is RNA(n+1) + phosphate = RNA(n) + a ribonucleoside 5'-diphosphate. Functionally, involved in mRNA degradation. Catalyzes the phosphorolysis of single-stranded polyribonucleotides processively in the 3'- to 5'-direction. The polypeptide is Polyribonucleotide nucleotidyltransferase (Synechococcus sp. (strain CC9311)).